A 560-amino-acid chain; its full sequence is Dihydroxy-acid dehydratase (560 aa).

Cys52 contacts [2Fe-2S] cluster. Asp84 lines the Mg(2+) pocket. Cys125 contacts [2Fe-2S] cluster. Mg(2+)-binding residues include Asp126 and Lys127. Lys127 is modified (N6-carboxylysine). Cys197 contributes to the [2Fe-2S] cluster binding site. Glu448 serves as a coordination point for Mg(2+). Catalysis depends on Ser474, which acts as the Proton acceptor.

This sequence belongs to the IlvD/Edd family. As to quaternary structure, homodimer. The cofactor is [2Fe-2S] cluster. Requires Mg(2+) as cofactor.

The enzyme catalyses (2R)-2,3-dihydroxy-3-methylbutanoate = 3-methyl-2-oxobutanoate + H2O. It carries out the reaction (2R,3R)-2,3-dihydroxy-3-methylpentanoate = (S)-3-methyl-2-oxopentanoate + H2O. Its pathway is amino-acid biosynthesis; L-isoleucine biosynthesis; L-isoleucine from 2-oxobutanoate: step 3/4. It functions in the pathway amino-acid biosynthesis; L-valine biosynthesis; L-valine from pyruvate: step 3/4. Functions in the biosynthesis of branched-chain amino acids. Catalyzes the dehydration of (2R,3R)-2,3-dihydroxy-3-methylpentanoate (2,3-dihydroxy-3-methylvalerate) into 2-oxo-3-methylpentanoate (2-oxo-3-methylvalerate) and of (2R)-2,3-dihydroxy-3-methylbutanoate (2,3-dihydroxyisovalerate) into 2-oxo-3-methylbutanoate (2-oxoisovalerate), the penultimate precursor to L-isoleucine and L-valine, respectively. This is Dihydroxy-acid dehydratase from Francisella tularensis subsp. tularensis (strain WY96-3418).